A 546-amino-acid chain; its full sequence is MAAKDVRFSADARDKMLRGVDILADAVKVTLGPKGRNVVIEKSFGAPRITKDGVTVAKEIELADKFENMGAQMVREVASKTNDIAGDGTTTATVLAQAIVREGAKFVAAGINPMDLKRGIDLATQAAVKDITARAKKVASSEEVAQVGTISANGDKEIGEMIAHAMQKVGNEGVITVEEAKTAETELDVVEGMQFDRGYLSPYFVTNAEKMVAELEDPYILIHEKKLSSLQPMLPVLEAVVQTGKPLLIIAEDIEGEALATLVVNKLRGGLKVAAVKAPGFGDRRKAMLEDIAILTKGQTISEDLGIKLENVALPMLGRAKRVRIEKENTTIIDGLGEKADIEARVGQIKAQIEETTSDYDREKLQERLAKLAGGVAVIRVGGATEVEVKEKKDRVDDALNATRAAVEEGIVPGGGTALLRAKKAVAELKSDVPDVQAGIKIVLKALEAPIRQIAQNAGVEGSIVVGKITDNTGSETYGFNAQTEEYVDMIQSGIVDPAKVVRTALQDAASVAGLLVTTEAMVADAPKKDSPAPAMPGGGMGGMDF.

ATP-binding positions include 30–33 (TLGP), lysine 51, 87–91 (DGTTT), glycine 415, and aspartate 497. The interval 527 to 546 (PKKDSPAPAMPGGGMGGMDF) is disordered. The span at 537–546 (PGGGMGGMDF) shows a compositional bias: gly residues.

Belongs to the chaperonin (HSP60) family. As to quaternary structure, forms a cylinder of 14 subunits composed of two heptameric rings stacked back-to-back. Interacts with the co-chaperonin GroES.

The protein resides in the cytoplasm. The catalysed reaction is ATP + H2O + a folded polypeptide = ADP + phosphate + an unfolded polypeptide.. Together with its co-chaperonin GroES, plays an essential role in assisting protein folding. The GroEL-GroES system forms a nano-cage that allows encapsulation of the non-native substrate proteins and provides a physical environment optimized to promote and accelerate protein folding. This chain is Chaperonin GroEL, found in Methylorubrum populi (strain ATCC BAA-705 / NCIMB 13946 / BJ001) (Methylobacterium populi).